Here is a 248-residue protein sequence, read N- to C-terminus: Gas vesicle protein J (248 aa).

The stretch at 121–140 is one 1; truncated repeat; that stretch reads DVKDDLYQTSAKIPSPVDTP. The tract at residues 121 to 245 is 6 X 21 AA approximate tandem repeats; sequence DVKDDLYQTS…EEIPSSVDPA (125 aa). 5 repeat units span residues 141–161, 162–182, 183–203, 204–224, and 225–245.

It belongs to the gas vesicle GvpA family. As to quaternary structure, interacts with GvpA.

The protein localises to the gas vesicle. Its function is as follows. A minor component of the gas vesicle, might be involved in nucleating gas vesicle formation. Gas vesicles (GV) are hollow, gas filled proteinaceous nanostructures. During planktonic growth they allow positioning of the organism at a favorable depth for light or nutrient acquisition. In Dolichospermum flosaquae (Anabaena flos-aquae), this protein is Gas vesicle protein J.